The following is a 326-amino-acid chain: Beta-ketoacyl-[acyl-carrier-protein] synthase III (326 aa).

Catalysis depends on residues Cys112 and His251. The interval 252–256 is ACP-binding; the sequence is QANSR. Asn281 is an active-site residue.

The protein belongs to the thiolase-like superfamily. FabH family. Homodimer.

The protein localises to the cytoplasm. The catalysed reaction is malonyl-[ACP] + acetyl-CoA + H(+) = 3-oxobutanoyl-[ACP] + CO2 + CoA. It functions in the pathway lipid metabolism; fatty acid biosynthesis. In terms of biological role, catalyzes the condensation reaction of fatty acid synthesis by the addition to an acyl acceptor of two carbons from malonyl-ACP. Catalyzes the first condensation reaction which initiates fatty acid synthesis and may therefore play a role in governing the total rate of fatty acid production. Possesses both acetoacetyl-ACP synthase and acetyl transacylase activities. Its substrate specificity determines the biosynthesis of branched-chain and/or straight-chain of fatty acids. In Clostridium botulinum (strain Okra / Type B1), this protein is Beta-ketoacyl-[acyl-carrier-protein] synthase III.